Reading from the N-terminus, the 524-residue chain is 2-isopropylmalate synthase (524 aa).

A Pyruvate carboxyltransferase domain is found at 12 to 274 (VIIFDTTLRD…WNRIESKMLT (263 aa)). 4 residues coordinate Mn(2+): Asp-21, His-209, His-211, and Asn-245. Residues 398–524 (RLKSLTVIAG…QDAPAVAVAG (127 aa)) are regulatory domain.

Belongs to the alpha-IPM synthase/homocitrate synthase family. LeuA type 1 subfamily. Homodimer. It depends on Mn(2+) as a cofactor.

It is found in the cytoplasm. It catalyses the reaction 3-methyl-2-oxobutanoate + acetyl-CoA + H2O = (2S)-2-isopropylmalate + CoA + H(+). It functions in the pathway amino-acid biosynthesis; L-leucine biosynthesis; L-leucine from 3-methyl-2-oxobutanoate: step 1/4. Its function is as follows. Catalyzes the condensation of the acetyl group of acetyl-CoA with 3-methyl-2-oxobutanoate (2-ketoisovalerate) to form 3-carboxy-3-hydroxy-4-methylpentanoate (2-isopropylmalate). The chain is 2-isopropylmalate synthase from Rhodopseudomonas palustris (strain BisB5).